The primary structure comprises 417 residues: Lipoyl synthase, mitochondrial (417 aa).

A mitochondrion-targeting transit peptide spans 1–26 (MAVCARGLRCLGTPAVSLRLAASRSY). The tract at residues 27-61 (ATTTPPDPAIPNTPGAAATSSPAKRPRTSFQDKLN) is disordered. Over residues 44–58 (ATSSPAKRPRTSFQD) the composition is skewed to polar residues. [4Fe-4S] cluster-binding residues include Cys-134, Cys-139, Cys-145, Cys-165, Cys-169, Cys-172, and Ser-380. Residues 148–369 (GGSKSAATAT…KEKALEMGFL (222 aa)) form the Radical SAM core domain. The tract at residues 398-417 (ESTGPGSASVQDVATGDLVR) is disordered.

It belongs to the radical SAM superfamily. Lipoyl synthase family. It depends on [4Fe-4S] cluster as a cofactor.

Its subcellular location is the mitochondrion. It carries out the reaction [[Fe-S] cluster scaffold protein carrying a second [4Fe-4S](2+) cluster] + N(6)-octanoyl-L-lysyl-[protein] + 2 oxidized [2Fe-2S]-[ferredoxin] + 2 S-adenosyl-L-methionine + 4 H(+) = [[Fe-S] cluster scaffold protein] + N(6)-[(R)-dihydrolipoyl]-L-lysyl-[protein] + 4 Fe(3+) + 2 hydrogen sulfide + 2 5'-deoxyadenosine + 2 L-methionine + 2 reduced [2Fe-2S]-[ferredoxin]. It participates in protein modification; protein lipoylation via endogenous pathway; protein N(6)-(lipoyl)lysine from octanoyl-[acyl-carrier-protein]: step 2/2. Functionally, catalyzes the radical-mediated insertion of two sulfur atoms into the C-6 and C-8 positions of the octanoyl moiety bound to the lipoyl domains of lipoate-dependent enzymes, thereby converting the octanoylated domains into lipoylated derivatives. This chain is Lipoyl synthase, mitochondrial, found in Uncinocarpus reesii (strain UAMH 1704).